The sequence spans 491 residues: Glutamyl-tRNA(Gln) amidotransferase subunit A (491 aa).

Catalysis depends on charge relay system residues Lys78 and Ser158. The Acyl-ester intermediate role is filled by Ser182.

The protein belongs to the amidase family. GatA subfamily. Heterotrimer of A, B and C subunits.

The enzyme catalyses L-glutamyl-tRNA(Gln) + L-glutamine + ATP + H2O = L-glutaminyl-tRNA(Gln) + L-glutamate + ADP + phosphate + H(+). In terms of biological role, allows the formation of correctly charged Gln-tRNA(Gln) through the transamidation of misacylated Glu-tRNA(Gln) in organisms which lack glutaminyl-tRNA synthetase. The reaction takes place in the presence of glutamine and ATP through an activated gamma-phospho-Glu-tRNA(Gln). The polypeptide is Glutamyl-tRNA(Gln) amidotransferase subunit A (Bradyrhizobium sp. (strain BTAi1 / ATCC BAA-1182)).